Reading from the N-terminus, the 2000-residue chain is Myosin-14 (2000 aa).

Ala2 carries the post-translational modification N-acetylalanine. Thr33 is subject to Phosphothreonine. The Myosin N-terminal SH3-like domain occupies 47-97 (TARRMVWVPSELHGFEAAALRDEGEEEAEVELAESGRRLRLPRDQIQRMNP). Ser56 is subject to Phosphoserine. Positions 101 to 804 (SKAEDMAELT…VLAQLEEERD (704 aa)) constitute a Myosin motor domain. 194–201 (GESGAGKT) serves as a coordination point for ATP. Positions 682-704 (LSRLMATLSNTNPSFVRCIVPNH) are actin-binding. The IQ domain occupies 807–836 (VTDIIVSFQAAARGYLARRAFQRRQQQQSA). Residues 866-1951 (LQVTRQDEVL…VTTLRNRLRR (1086 aa)) are a coiled coil. Ser925 is modified (phosphoserine). Residues 1173-1197 (RGELEDTLDSTNAQQELRSKREQEV) are disordered. The residue at position 1198 (Thr1198) is a Phosphothreonine. 2 positions are modified to phosphoserine: Ser1249 and Ser1280. Disordered stretches follow at residues 1260 to 1311 (ELSS…AELE), 1597 to 1629 (HERD…RDEE), 1720 to 1751 (SDRA…TLEE), 1910 to 1942 (AEEE…NREV), and 1967 to 2000 (LEEG…ATPQ). Residues 1290–1304 (SDSERARSEAAEKLQ) are compositionally biased toward basic and acidic residues. The segment covering 1720 to 1732 (SDRARRQAQQDRD) has biased composition (basic and acidic residues). Acidic residues predominate over residues 1971 to 1980 (VASDEEEAEG). Phosphoserine occurs at positions 1973 and 1985. The segment covering 1981-1991 (AEPGSAPGQEP) has biased composition (low complexity). The residue at position 1998 (Thr1998) is a Phosphothreonine.

Belongs to the TRAFAC class myosin-kinesin ATPase superfamily. Myosin family. As to quaternary structure, myosin is a hexameric protein that consists of 2 heavy chain subunits (MHC), 2 alkali light chain subunits (MLC) and 2 regulatory light chain subunits (MLC-2). Highest levels in lung, kidney, brain and colon, very low levels in liver and bladder and no expression in spleen or seminal vesicle (at protein level). Isoform 1 is expressed in liver, kidney and testis with low levels in skeletal muscle and heart. Isoform 1 and isoform 2 are expressed in brain and lung. Isoform 2 is the main isoform expressed in skeletal muscle and heart. Isoform 3 is limited to brain stem, cerebellum and spinal cord.

In terms of biological role, cellular myosin that appears to play a role in cytokinesis, cell shape, and specialized functions such as secretion and capping. The chain is Myosin-14 (Myh14) from Mus musculus (Mouse).